The sequence spans 194 residues: MALRGPAKTVAQTVSVVIFMGALAWASVPLYDWFCRVTGFGGVTGVSDVAPEDILDQTITIRFDGSLNNHMPWEFKPVVREMDVRIGESGLAFYEAYNPTDRPVAGSASYNVTPYQAGGFFNKIQCFCFEEQVLQPGERVQMPVTFYVDPEIVDDRDGKHVHTITLSYTFYEIDLPEEYADAQDIEENSDTSLN.

Topologically, residues 1–12 are cytoplasmic; the sequence is MALRGPAKTVAQ. A helical; Signal-anchor for type II membrane protein membrane pass occupies residues 13–35; that stretch reads TVSVVIFMGALAWASVPLYDWFC. Over 36–194 the chain is Periplasmic; that stretch reads RVTGFGGVTG…IEENSDTSLN (159 aa).

The protein belongs to the COX11/CtaG family.

The protein resides in the cell inner membrane. Functionally, exerts its effect at some terminal stage of cytochrome c oxidase synthesis, probably by being involved in the insertion of the copper B into subunit I. The polypeptide is Cytochrome c oxidase assembly protein CtaG (Roseobacter denitrificans (strain ATCC 33942 / OCh 114) (Erythrobacter sp. (strain OCh 114))).